A 107-amino-acid polypeptide reads, in one-letter code: MTKSELVAQLATRFPQLVLKDADFAVKTMLDAMSDALANGHRIEIRGFGSFGLNRRPSRVGRNPKSGEKVLVPEKHVPHFKPGKELRERVDRNAGEPLKADAADDDL.

A disordered region spans residues 56-107 (RPSRVGRNPKSGEKVLVPEKHVPHFKPGKELRERVDRNAGEPLKADAADDDL). A compositionally biased stretch (basic and acidic residues) spans 65-107 (KSGEKVLVPEKHVPHFKPGKELRERVDRNAGEPLKADAADDDL).

It belongs to the bacterial histone-like protein family. In terms of assembly, heterodimer of an alpha and a beta chain.

Functionally, this protein is one of the two subunits of integration host factor, a specific DNA-binding protein that functions in genetic recombination as well as in transcriptional and translational control. The polypeptide is Integration host factor subunit beta (Paraburkholderia phymatum (strain DSM 17167 / CIP 108236 / LMG 21445 / STM815) (Burkholderia phymatum)).